A 310-amino-acid polypeptide reads, in one-letter code: Olfactory receptor 4C16 (310 aa).

At 1-23 (MQLNNNVTEFILLGLTQDPFWKK) the chain is on the extracellular side. Asparagine 6 carries N-linked (GlcNAc...) asparagine glycosylation. A helical membrane pass occupies residues 24–47 (IVFVIFLRLYLGTLLGNLLIIISV). The Cytoplasmic portion of the chain corresponds to 48–55 (KTSQALKN). Residues 56-77 (PMFFFLFYLSLSDTCLSTSITP) form a helical membrane-spanning segment. At 78–98 (RMIVDALLKKTTISFSECMIQ) the chain is on the extracellular side. Cysteines 95 and 187 form a disulfide. A helical transmembrane segment spans residues 99–118 (VFSSHVFGCLEIFILILTAV). Residues 119-137 (DRYVDICKPLHYMTIISQW) are Cytoplasmic-facing. The helical transmembrane segment at 138–156 (VCGVLMAVAWVGSCVHSLV) threads the bilayer. Topologically, residues 157-193 (QIFLALSLPFCGPNVINHCFCDLQPLLKQACSETYVV) are extracellular. A helical transmembrane segment spans residues 194 to 217 (NLLLVSNSGAICAVSYVMLIFSYV). At 218 to 233 (IFLHSLRNHSAEVIKK) the chain is on the cytoplasmic side. Residues 234 to 256 (ALSTCVSHIIVVILFFGPCIFMY) traverse the membrane as a helical segment. Over 257–267 (TCLATVFPMDK) the chain is Extracellular. Residues 268-287 (MIAVFYTVGTSFLNPVIYTL) traverse the membrane as a helical segment. The Cytoplasmic segment spans residues 288–310 (KNTEVKSAMRKLWSKKLITDDKR).

This sequence belongs to the G-protein coupled receptor 1 family.

Its subcellular location is the cell membrane. Functionally, odorant receptor. In Homo sapiens (Human), this protein is Olfactory receptor 4C16 (OR4C16).